A 212-amino-acid chain; its full sequence is MQTRKTGVRAQQADRTRDNILKAAVKVFSKEGFTGGRIEQISTLAKSNDRMIYYYFGSKEKLFISVLEHIYASFNQAEAKLRLDLADPEQALRELVAFIWDYYVRHPEFVTILATENLHQGLHARKSQNLRALSGEAVGVLRPIIEAGQAKGLFRDDICITHAYLMIASLCYFYNSNRHTLSSFLAVDLADKQAKADWLTFISDLALRGLRR.

The HTH tetR-type domain occupies 14-74 (DRTRDNILKA…SVLEHIYASF (61 aa)). Positions 37 to 56 (RIEQISTLAKSNDRMIYYYF) form a DNA-binding region, H-T-H motif.

It participates in cofactor degradation; nicotinate degradation [regulation]. Functionally, transcriptional repressor for the nicAB operon, encoding the upper aerobic nicotinate degradation pathway. Acts under non-induced conditions: repression of the nicAB operon becomes alleviated in presence of either nicotinate or 6-hydroxynicotinate (6HNA). This is HTH-type transcriptional repressor NicS (nicS) from Pseudomonas putida (strain ATCC 47054 / DSM 6125 / CFBP 8728 / NCIMB 11950 / KT2440).